The chain runs to 529 residues: 3-ketoacyl-CoA synthase 20 (529 aa).

Residues 1–22 (MSHNQNQPHRPVPVHVTNAEPN) are disordered. 2 helical membrane-spanning segments follow: residues 52 to 72 (LYILLLPLLAATIANLSSFTI) and 84 to 104 (FHFLSATLATALLISLSTAYF). Residues 103–396 (YFTTRPRRVF…FFATLVARKV (294 aa)) enclose the FAE domain. Residues Cys-247, His-326, His-415, His-419, and Asn-452 contribute to the active site.

Belongs to the thiolase-like superfamily. Chalcone/stilbene synthases family. As to expression, expressed in aerial organs. Expressed in leaves, flowers, siliques and stems. Expressed in roots, young seedlings, leaves, flowers and siliques.

The protein localises to the membrane. It carries out the reaction a very-long-chain acyl-CoA + malonyl-CoA + H(+) = a very-long-chain 3-oxoacyl-CoA + CO2 + CoA. The protein operates within lipid metabolism; fatty acid biosynthesis. Inhibited by K3 herbicides such as alachlor, allidochlor, anilofos, cafenstrole, fentrazamide and flufenacet. Strongly inhibited by metazachlor and only slightly by mefluidide. Mediates the synthesis of VLCFAs from 22 to 26 carbons in length (e.g. C22, C24, C26). Functionally redundant with KCS2 in the two-carbon elongation of C22 fatty acids that is required for cuticular wax and root suberin biosynthesis. The chain is 3-ketoacyl-CoA synthase 20 from Arabidopsis thaliana (Mouse-ear cress).